The primary structure comprises 431 residues: Large envelope protein (431 aa).

Gly-2 carries the N-myristoyl glycine; by host lipid modification. A pre-S1 region spans residues 2 to 148 (GNNIKVTFNP…PPLRDTHPHL (147 aa)). The interval 2 to 207 (GNNIKVTFNP…PSTTGDPALS (206 aa)) is pre-S. Over 2-214 (GNNIKVTFNP…ALSPEMSPSS (213 aa)) the chain is Virion surface; in external conformation. At 2–286 (GNNIKVTFNP…NGFRWMYLRR (285 aa)) the chain is on the intravirion; in internal conformation side. N-linked (GlcNAc...) asparagine glycosylation is present at Asn-3. A disordered region spans residues 115–147 (IPRGLVPPQTPTNRDQGRKPTPPTPPLRDTHPH). The interval 149 to 207 (TMKNQTFHLQGFVDGLRDLTTTERQHNAYRDPFTTLSPAVPTVSTILSPPSTTGDPALS) is pre-S2. Residues 215–235 (LLGLLAGLQVVYFLWTKILTI) traverse the membrane as a helical segment. Residues 236–286 (AQNLDWWCTSLSFPGGIPECTGQNSQFQTCKHLPTSCPPTCNGFRWMYLRR) lie on the Intravirion; in external conformation side of the membrane. Residues 287 to 307 (FIIYLLVLLLCLIFLLVLLDW) traverse the membrane as a helical segment. The Virion surface segment spans residues 308–379 (KGLIPVCPLQ…WALARLSWLN (72 aa)). Residue Asn-351 is glycosylated (N-linked (GlcNAc...) asparagine; by host). Residues 380–400 (LLVPLLQWLGGISLIAWFLLI) form a helical membrane-spanning segment. The Intravirion portion of the chain corresponds to 401–406 (WMIWFW). Residues 407–429 (GPALLSILPPFIPIFVLFFLIWV) traverse the membrane as a helical segment. Topologically, residues 430 to 431 (YI) are virion surface.

Belongs to the orthohepadnavirus major surface antigen family. In its internal form (Li-HBsAg), interacts with the capsid protein and with the isoform S. Interacts with host chaperone CANX. As to quaternary structure, associates with host chaperone CANX through its pre-S2 N glycan; this association may be essential for isoform M proper secretion. In terms of assembly, interacts with isoform L. Interacts with the antigens of satellite virus HDV (HDVAgs); this interaction is required for encapsidation of HDV genomic RNA. In terms of processing, isoform M is N-terminally acetylated by host at a ratio of 90%, and N-glycosylated by host at the pre-S2 region. Myristoylated.

It is found in the virion membrane. Its function is as follows. The large envelope protein exists in two topological conformations, one which is termed 'external' or Le-HBsAg and the other 'internal' or Li-HBsAg. In its external conformation the protein attaches the virus to cell receptors and thereby initiating infection. This interaction determines the species specificity and liver tropism. This attachment induces virion internalization predominantly through caveolin-mediated endocytosis. The large envelope protein also assures fusion between virion membrane and endosomal membrane. In its internal conformation the protein plays a role in virion morphogenesis and mediates the contact with the nucleocapsid like a matrix protein. The middle envelope protein plays an important role in the budding of the virion. It is involved in the induction of budding in a nucleocapsid independent way. In this process the majority of envelope proteins bud to form subviral lipoprotein particles of 22 nm of diameter that do not contain a nucleocapsid. In Marmota monax (Woodchuck), this protein is Large envelope protein.